Consider the following 359-residue polypeptide: Peptide chain release factor 1 (359 aa).

Q235 carries the N5-methylglutamine modification.

The protein belongs to the prokaryotic/mitochondrial release factor family. Post-translationally, methylated by PrmC. Methylation increases the termination efficiency of RF1.

Its subcellular location is the cytoplasm. In terms of biological role, peptide chain release factor 1 directs the termination of translation in response to the peptide chain termination codons UAG and UAA. This Polynucleobacter necessarius subsp. necessarius (strain STIR1) protein is Peptide chain release factor 1.